We begin with the raw amino-acid sequence, 273 residues long: MLSRRGHRLSRFRKNKRRLRERLRQRIFFRDKVVPEAMEKPRVLVLTGAGISAESGIRTFRAADGLWEEHRVEDVATPEGFDRDPELVQAFYNARRRQLQQPEIQPNAAHLALAKLQDALGDRFLLVTQNIDNLHERAGNTNVIHMHGELLKVRCSQSGQVLDWTGDVTPEDKCHCCQFPAPLRPHVVWFGEMPLGMDEIYMALSMADVFIAIGTSGHVYPAAGFVHEAKLHGAHTVELNLEPSQVGNEFAEKYYGPASQVVPEFVEKLLEGL.

The region spanning 20-272 (RERLRQRIFF…PEFVEKLLEG (253 aa)) is the Deacetylase sirtuin-type domain. 48–67 (GAGISAESGIRTFRAADGLW) provides a ligand contact to NAD(+). Tyr-92 and Arg-95 together coordinate substrate. 129 to 132 (QNID) contacts NAD(+). His-147 functions as the Proton acceptor in the catalytic mechanism. 2 residues coordinate Zn(2+): Cys-155 and Cys-174. NAD(+)-binding positions include 214–216 (GTS), 240–242 (NLE), and Ala-258.

The protein belongs to the sirtuin family. Class III subfamily. Zn(2+) is required as a cofactor.

The protein resides in the cytoplasm. It carries out the reaction N(6)-acetyl-L-lysyl-[protein] + NAD(+) + H2O = 2''-O-acetyl-ADP-D-ribose + nicotinamide + L-lysyl-[protein]. The enzyme catalyses N(6)-succinyl-L-lysyl-[protein] + NAD(+) + H2O = 2''-O-succinyl-ADP-D-ribose + nicotinamide + L-lysyl-[protein]. It catalyses the reaction N(6)-(2-hydroxyisobutanoyl)-L-lysyl-[protein] + NAD(+) + H2O = 2''-O-(2-hydroxyisobutanoyl)-ADP-D-ribose + nicotinamide + L-lysyl-[protein]. Its function is as follows. NAD-dependent lysine deacetylase that specifically removes acetyl groups on target proteins. Also acts as a protein-lysine deacylase by mediating protein desuccinylation and de-2-hydroxyisobutyrylation. Modulates the activities of several proteins which are inactive in their acylated form. This Shigella flexneri protein is NAD-dependent protein deacylase.